Consider the following 229-residue polypeptide: Purine nucleoside phosphorylase BB_0467 (229 aa).

Positions 55, 91, and 108 each coordinate Zn(2+).

Belongs to the purine nucleoside phosphorylase YfiH/LACC1 family. As to quaternary structure, homodimer. It depends on Cu(2+) as a cofactor. Zn(2+) is required as a cofactor.

It catalyses the reaction adenosine + phosphate = alpha-D-ribose 1-phosphate + adenine. The enzyme catalyses S-methyl-5'-thioadenosine + phosphate = 5-(methylsulfanyl)-alpha-D-ribose 1-phosphate + adenine. It carries out the reaction inosine + phosphate = alpha-D-ribose 1-phosphate + hypoxanthine. The catalysed reaction is adenosine + H2O + H(+) = inosine + NH4(+). Purine nucleoside enzyme that catalyzes the phosphorolysis of adenosine and inosine nucleosides, yielding D-ribose 1-phosphate and the respective free bases, adenine and hypoxanthine. Also catalyzes the phosphorolysis of S-methyl-5'-thioadenosine into adenine and S-methyl-5-thio-alpha-D-ribose 1-phosphate. Also has adenosine deaminase activity. The sequence is that of Purine nucleoside phosphorylase BB_0467 from Borreliella burgdorferi (strain ATCC 35210 / DSM 4680 / CIP 102532 / B31) (Borrelia burgdorferi).